The chain runs to 247 residues: MSAAQSAVRSHAEAVQVSRTIDWMALFVVFFVIVGSYHIHAMLTMGDWDFWSDWKDRRLWVTVTPIVLVTFPAAVQSYLWERYRLPWGATVCVLGLLLGEWINRYFNFWGWTYFPINFVFPASLVPGAIILDTVLMLSGSYLFTAIVGAMGWGLIFYPGNWPIIAPLHVPVEYNGMLMSIADIQGYNYVRTGTPEYIRMVEKGTLRTFGKDVAPVSAFFSAFMSILIYFMWHFIGRWFSNERFLQST.

6 consecutive transmembrane segments (helical) span residues 23–43 (WMALFVVFFVIVGSYHIHAML), 59–79 (LWVTVTPIVLVTFPAAVQSYL), 86–106 (PWGATVCVLGLLLGEWINRYF), 111–131 (WTYFPINFVFPASLVPGAIIL), 145–165 (AIVGAMGWGLIFYPGNWPIIA), and 215–235 (VSAFFSAFMSILIYFMWHFIG).

M.capsulatus has two forms of methane monooxygenase, a soluble (sMMO) and a membrane-bound (particulate) type (pMMO). The particulate type is a nonamer composed of three alpha:beta:gamma heterotrimeric protomers assembled into a cylindrical structure; the beta and gamma subunits comprise the bulk of the membrane-spanning regions and the soluble regions are derived primarily from alpha subunits which form two antiparallel beta-barrel-like structures each. This assembly, also called pMMO hydroxylase (pMMO-H), is proposed to associate with methanol dehydrogenase (MDH), also designated as pMMO-R, to form the pMMO-C complex which seems to have greater methane monooxygenase activity.

The protein localises to the membrane. The catalysed reaction is methane + a quinol + O2 = methanol + a quinone + H2O. Non-catalytic subunit of the methane monooxygenase that is responsible for the initial oxygenation of methane to methanol in methanotrophs. At least in vitro, specific quinols can replace NADH as reductants. This is Particulate methane monooxygenase beta subunit (pmoA1) from Methylococcus capsulatus (strain ATCC 33009 / NCIMB 11132 / Bath).